The primary structure comprises 248 residues: Exosome complex component Rrp41 (248 aa).

The protein belongs to the RNase PH family. Rrp41 subfamily. As to quaternary structure, component of the archaeal exosome complex. Forms a hexameric ring-like arrangement composed of 3 Rrp41-Rrp42 heterodimers. The hexameric ring associates with a trimer of Rrp4 and/or Csl4 subunits.

It localises to the cytoplasm. Its function is as follows. Catalytic component of the exosome, which is a complex involved in RNA degradation. Has 3'-&gt;5' exoribonuclease activity. Can also synthesize heteromeric RNA-tails. This Thermoplasma acidophilum (strain ATCC 25905 / DSM 1728 / JCM 9062 / NBRC 15155 / AMRC-C165) protein is Exosome complex component Rrp41.